The following is a 1237-amino-acid chain: Glutamate receptor ionotropic, NMDA 2C (1237 aa).

The first 19 residues, 1 to 19 (MGGALGPALLLTSLLGAWA), serve as a signal peptide directing secretion. Over 20-554 (RLGAGQGEQA…SAFLEPYSPA (535 aa)) the chain is Extracellular. N-linked (GlcNAc...) asparagine glycans are attached at residues Asn-70 and Asn-73. An intrachain disulfide couples Cys-82 to Cys-317. N-linked (GlcNAc...) asparagine glycosylation is found at Asn-337 and Asn-438. Cystine bridges form between Cys-426–Cys-453 and Cys-433–Cys-454. The L-glutamate site is built by Ser-509, Thr-511, and Arg-516. Asn-539 carries an N-linked (GlcNAc...) asparagine glycan. Residues 555–575 (VWVMMFVMCLTVVAITVFMFE) traverse the membrane as a helical segment. The Cytoplasmic segment spans residues 576–601 (YFSPVSYNQNLTKGKKPGGPSFTIGK). Residues 601-620 (KSVWLLWALVFNNSVPIENP) are pore-forming. Positions 602 to 611 (SVWLLWALVF) form an intramembrane region, discontinuously helical. Topologically, residues 612–622 (NNSVPIENPRG) are cytoplasmic. Residues 623 to 644 (TTSKIMVLVWAFFAVIFLASYT) traverse the membrane as a helical segment. Topologically, residues 645–813 (ANLAAFMIQE…EVMSSKLDID (169 aa)) are extracellular. The N-linked (GlcNAc...) asparagine glycan is linked to Asn-685. Ser-687, Thr-688, and Asp-729 together coordinate L-glutamate. An intrachain disulfide couples Cys-743 to Cys-798. Residues 814 to 833 (NMAGVFYMLLVAMGLALLVF) form a helical membrane-spanning segment. At 834-1237 (AWEHLVYWKL…RRVSSLESEV (404 aa)) the chain is on the cytoplasmic side. 3 positions are modified to phosphoserine: Ser-875, Ser-881, and Ser-912. The segment covering 907–925 (ADVSSSLDRATRTIENWGN) has biased composition (polar residues). A disordered region spans residues 907–990 (ADVSSSLDRA…LPDVSRPSCR (84 aa)). Low complexity predominate over residues 930–941 (PAPTASGPRSST). The segment covering 968–982 (PQPPARPATCGPPLP) has biased composition (pro residues). A PDZ-binding motif is present at residues 1235-1237 (SEV).

The protein belongs to the glutamate-gated ion channel (TC 1.A.10.1) family. NR2C/GRIN2C subfamily. Heterotetramer. Forms heterotetrameric channels composed of two GluN1/zeta subunits (GRIN1), and two identical GluN2/epsilon subunits (GRIN2A, GRIN2B, GRIN2C or GRIN2D) or GluN3 subunits (GRIN3A or GRIN3B) (in vitro). In vivo, the subunit composition may depend on the expression levels of the different subunits. Interacts with PDZ domains of PATJ and DLG4. Interacts (via PDZ-binding motif) with SNX27 (via PDZ domain); the interaction is required for recycling to the plasma membrane when endocytosed and prevent degradation in lysosomes. As to expression, detected in cerebellum.

It localises to the cell membrane. Its subcellular location is the postsynaptic cell membrane. The catalysed reaction is Ca(2+)(in) = Ca(2+)(out). The enzyme catalyses Na(+)(in) = Na(+)(out). It carries out the reaction K(+)(in) = K(+)(out). Component of N-methyl-D-aspartate (NMDA) receptors (NMDARs) that function as heterotetrameric, ligand-gated cation channels with high calcium permeability and voltage-dependent block by Mg(2+). Participates in synaptic plasticity for learning and memory formation by contributing to the slow phase of excitatory postsynaptic current and long-term synaptic potentiation. Channel activation requires binding of the neurotransmitter L-glutamate to the GluN2 subunit, glycine or D-serine binding to the GluN1 subunit, plus membrane depolarization to eliminate channel inhibition by Mg(2+). NMDARs mediate simultaneously the potasium efflux and the influx of calcium and sodium. Each GluN2 subunit confers differential attributes to channel properties, including activation, deactivation and desensitization kinetics, pH sensitivity, Ca2(+) permeability, and binding to allosteric modulators. The sequence is that of Glutamate receptor ionotropic, NMDA 2C from Rattus norvegicus (Rat).